The sequence spans 76 residues: Small proline-rich protein 2G (76 aa).

Repeat copies occupy residues 21-29, 30-38, and 39-47. The segment at 21 to 47 is 3 X 9 AA approximate tandem repeats; sequence PKCPEPCPLPKCPEPCPPPKCPEPCPE. A disordered region spans residues 55–76; that stretch reads QQKCPPVQTPPPCQQKCPPKSK.

This sequence belongs to the cornifin (SPRR) family. Expressed in uterus.

It is found in the cytoplasm. In terms of biological role, cross-linked envelope protein of keratinocytes. It is a keratinocyte protein that first appears in the cell cytosol, but ultimately becomes cross-linked to membrane proteins by transglutaminase. All that results in the formation of an insoluble envelope beneath the plasma membrane. The sequence is that of Small proline-rich protein 2G (Sprr2g) from Mus musculus (Mouse).